We begin with the raw amino-acid sequence, 699 residues long: Large T antigen (699 aa).

N-acetylmethionine; by host is present on methionine 1. One can recognise a J domain in the interval 12 to 75; the sequence is ELMDLLGLER…VKVAHQPDFG (64 aa). Residues 105-109 carry the LXCXE motif motif; sequence LFCHE. Serine 114, serine 122, and serine 125 each carry phosphoserine; by host. Residues 115–137 form a disordered region; sequence DEEGTADSQHSTPPKKKRKVEDP. At threonine 126 the chain carries Phosphothreonine; by host. The short motif at 127–134 is the Nuclear localization signal element; that stretch reads PPKKKRKV. The T-ag OBD DNA-binding region spans 141-256; it reads PPDLHAFLSQ…EESIQGGLKE (116 aa). Residues 267-359 form a T-ag D1-type zinc finger; it reads TKQVSWKLIT…KRVDTLHMTR (93 aa). The Zn(2+) site is built by cysteine 304, cysteine 307, histidine 315, and histidine 319. The SF3 helicase domain maps to 402–562; it reads KMDTLIYDFL…IYLRKALNNS (161 aa). 428–435 serves as a coordination point for ATP; it reads GPIDSGKT. The segment at 637 to 678 is disordered; the sequence is ETEDSGHGSSTESQSQCFSQASDTSGSADAPASQTPDPYDHD. Polar residues predominate over residues 643–672; it reads HGSSTESQSQCFSQASDTSGSADAPASQTP. Serine 661 carries the post-translational modification Phosphoserine; by host. Residue lysine 691 is modified to N6-acetyllysine; by host. Position 695 is a phosphothreonine; by host (threonine 695).

As to quaternary structure, forms homohexamers in the presence of ATP. Interacts with host HDAC1. Interacts (via LXCXE domain) with host RB1; the interaction induces the aberrant dissociation of RB1-E2F1 complex thereby disrupting RB1's activity. Interacts (via LXCXE domain) with host pRB-related proteins RBL1 and RBL2. Interacts (via C-terminus) with host TOP1 and POLA1 allowing DNA replication. Interacts with host TP53, inhibiting TP53 binding to DNA. Interacts with host preinitiation complex components TBP, TFIIA and TFIID to regulate transcription initiation. Mg(2+) serves as cofactor. In terms of processing, phosphorylated on both serine and threonine residues. Small t antigen inhibits the dephosphorylation by the AC form of PP2A. O-Glycosylated near the C-terminal region. Post-translationally, acetylated by CBP in a TP53-dependent manner.

The protein resides in the host nucleus. The catalysed reaction is Couples ATP hydrolysis with the unwinding of duplex DNA by translocating in the 3'-5' direction.. It catalyses the reaction ATP + H2O = ADP + phosphate + H(+). Its function is as follows. Isoform large T antigen is a key early protein essential for both driving viral replication and inducing cellular transformation. Plays a role in viral genome replication by driving entry of quiescent cells into the cell cycle and by autoregulating the synthesis of viral early mRNA. Displays highly oncogenic activities by corrupting the host cellular checkpoint mechanisms that guard cell division and the transcription, replication, and repair of DNA. Participates in the modulation of cellular gene expression preceeding viral DNA replication. This step involves binding to host key cell cycle regulators retinoblastoma protein RB1/pRb and TP53. Induces the disassembly of host E2F1 transcription factors from RB1, thus promoting transcriptional activation of E2F1-regulated S-phase genes. Inhibits host TP53 binding to DNA, abrogating the ability of TP53 to stimulate gene expression. Plays the role of a TFIID-associated factor (TAF) in transcription initiation for all three RNA polymerases, by stabilizing the TBP-TFIIA complex on promoters. Initiates viral DNA replication and unwinding via interactions with the viral origin of replication. Binds two adjacent sites in the SV40 origin. The replication fork movement is facilitated by Large T antigen helicase activity. Has processive 3'-5' DNA helicase activity which requires a short 3' single-stranded region and ATP. Activates the transcription of viral late mRNA, through host TBP and TFIIA stabilization. Interferes with histone deacetylation mediated by HDAC1, leading to activation of transcription. In Papio hamadryas ursinus (Chacma baboon), this protein is Large T antigen.